We begin with the raw amino-acid sequence, 64 residues long: Small ribosomal subunit protein bS21 (64 aa).

Residues 39–64 form a disordered region; sequence EKPSVKRKKKALAAKKRAVKKARKSF. The span at 43 to 64 shows a compositional bias: basic residues; it reads VKRKKKALAAKKRAVKKARKSF.

Belongs to the bacterial ribosomal protein bS21 family.

The protein is Small ribosomal subunit protein bS21 (rpsU) of Myxococcus xanthus.